A 99-amino-acid chain; its full sequence is Co-chaperonin GroES (99 aa).

The protein belongs to the GroES chaperonin family. Heptamer of 7 subunits arranged in a ring. Interacts with the chaperonin GroEL.

Its subcellular location is the cytoplasm. Its function is as follows. Together with the chaperonin GroEL, plays an essential role in assisting protein folding. The GroEL-GroES system forms a nano-cage that allows encapsulation of the non-native substrate proteins and provides a physical environment optimized to promote and accelerate protein folding. GroES binds to the apical surface of the GroEL ring, thereby capping the opening of the GroEL channel. The polypeptide is Co-chaperonin GroES (Corynebacterium jeikeium (strain K411)).